The following is a 346-amino-acid chain: Holliday junction branch migration complex subunit RuvB (346 aa).

The large ATPase domain (RuvB-L) stretch occupies residues 1–182 (MSEPARLISP…FGIPVRLSFY (182 aa)). Residues Leu-21, Arg-22, Gly-63, Lys-66, Thr-67, Thr-68, 129 to 131 (EDF), Arg-172, Tyr-182, and Arg-219 contribute to the ATP site. Thr-67 provides a ligand contact to Mg(2+). Positions 183–253 (TVEELELIVR…IADEALTRLL (71 aa)) are small ATPAse domain (RuvB-S). Residues 256–346 (NVGFDQLDKR…AQFRLFQEDN (91 aa)) form a head domain (RuvB-H) region. DNA contacts are provided by Arg-292, Arg-311, and Arg-316.

It belongs to the RuvB family. As to quaternary structure, homohexamer. Forms an RuvA(8)-RuvB(12)-Holliday junction (HJ) complex. HJ DNA is sandwiched between 2 RuvA tetramers; dsDNA enters through RuvA and exits via RuvB. An RuvB hexamer assembles on each DNA strand where it exits the tetramer. Each RuvB hexamer is contacted by two RuvA subunits (via domain III) on 2 adjacent RuvB subunits; this complex drives branch migration. In the full resolvosome a probable DNA-RuvA(4)-RuvB(12)-RuvC(2) complex forms which resolves the HJ.

The protein localises to the cytoplasm. It catalyses the reaction ATP + H2O = ADP + phosphate + H(+). In terms of biological role, the RuvA-RuvB-RuvC complex processes Holliday junction (HJ) DNA during genetic recombination and DNA repair, while the RuvA-RuvB complex plays an important role in the rescue of blocked DNA replication forks via replication fork reversal (RFR). RuvA specifically binds to HJ cruciform DNA, conferring on it an open structure. The RuvB hexamer acts as an ATP-dependent pump, pulling dsDNA into and through the RuvAB complex. RuvB forms 2 homohexamers on either side of HJ DNA bound by 1 or 2 RuvA tetramers; 4 subunits per hexamer contact DNA at a time. Coordinated motions by a converter formed by DNA-disengaged RuvB subunits stimulates ATP hydrolysis and nucleotide exchange. Immobilization of the converter enables RuvB to convert the ATP-contained energy into a lever motion, pulling 2 nucleotides of DNA out of the RuvA tetramer per ATP hydrolyzed, thus driving DNA branch migration. The RuvB motors rotate together with the DNA substrate, which together with the progressing nucleotide cycle form the mechanistic basis for DNA recombination by continuous HJ branch migration. Branch migration allows RuvC to scan DNA until it finds its consensus sequence, where it cleaves and resolves cruciform DNA. This is Holliday junction branch migration complex subunit RuvB from Rhizobium leguminosarum bv. trifolii (strain WSM2304).